A 237-amino-acid chain; its full sequence is MQTIALAVIGGTGVYTLSQLDDVQVYEVETLYGRPSGPIRVGMLFGQRVAFFARHGEEHALPPHKINYRANIAALQQLGVSRVLALNTVGGINEAFGPRTLVCPDQLIDYTWGRVSTFCEEVGSEVLHVDFGHPYSPLLRGCLLRAARDVDVSLVEYGCYGVTQGPRLETIAEIARLRRDGCDLVGMTGMPEAALAREKGLEYACLGIVSNWAAGCGDGAEITMGEILSNVATVFRN.

Phosphate contacts are provided by residues Thr-12 and 54–55; that span reads RH. Met-187 lines the substrate pocket. Residue Thr-188 participates in phosphate binding. Position 211–213 (211–213) interacts with substrate; the sequence is NWA.

The protein belongs to the PNP/MTAP phosphorylase family. MTAP subfamily. Homotrimer.

The enzyme catalyses S-methyl-5'-thioinosine + phosphate = 5-(methylsulfanyl)-alpha-D-ribose 1-phosphate + hypoxanthine. It participates in purine metabolism; purine nucleoside salvage. Catalyzes the reversible phosphorylation of S-methyl-5'-thioinosine (MTI) to hypoxanthine and 5-methylthioribose-1-phosphate. Involved in the breakdown of S-methyl-5'-thioadenosine (MTA), a major by-product of polyamine biosynthesis. Catabolism of (MTA) occurs via deamination to MTI and phosphorolysis to hypoxanthine. The sequence is that of Probable S-methyl-5'-thioinosine phosphorylase from Xylella fastidiosa (strain 9a5c).